Reading from the N-terminus, the 123-residue chain is UPF0102 protein CLK_1817 (123 aa).

It belongs to the UPF0102 family.

The chain is UPF0102 protein CLK_1817 from Clostridium botulinum (strain Loch Maree / Type A3).